We begin with the raw amino-acid sequence, 425 residues long: MDQLTSAARLMIVSDLDHTMVDHHDPENLSLLRFNALWEANYRENSLLVFSTGRSPTLYKELRKEKPMLTPDITIMSVGTEITYGNSMEPDDGWEAFLNDKWDRKIVTEETSKFPELTLQSETEQRPHKVSFYVQKDKAQDITGTLSKRLEERGLDVKIIYSGGMDLDILPQGAGKGRALAYLLKKLKSEGKLPNNTLACGDSGNDAELFSIPDVYGVMVANAQEELLQWRAANAKDSPKVIHATERCAAGIIQAIGHFNLGPNTSPRDVTDMSDCKMENFVPAYEVVKFYLFFEKWRRGEIENSDLHLSNLKAVCRPSGTFVHPSGVEKYLEDCINTLRTCHGDKQGKQFRIWVDLVLPTQVGSDSWLVSFKKWELCGEERQCCITTVLLSSKNVTVADGLTWTHVHQTWLQGAAASDSASWFF.

The protein belongs to the sucrose phosphatase family. In terms of assembly, homodimer. It depends on Mg(2+) as a cofactor.

The enzyme catalyses sucrose 6(F)-phosphate + H2O = sucrose + phosphate. Its pathway is glycan biosynthesis; sucrose biosynthesis; sucrose from D-fructose 6-phosphate and UDP-alpha-D-glucose: step 2/2. Inhibited by EDTA. Functionally, catalyzes the final step of sucrose synthesis. The polypeptide is Sucrose-phosphatase 1 (SPP1) (Nicotiana tabacum (Common tobacco)).